The following is a 259-amino-acid chain: Peroxisomal membrane protein 11B (259 aa).

Lys-43 is subject to N6-acetyllysine. The interaction with PEX19, PEX11G and FIS1 and peroxisome targeting stretch occupies residues 211 to 259; it reads VVRNACDLFIPLDKLGLWRCGPGIVGLCGLVSSILSILTLIYPWLRLKP. The helical transmembrane segment at 234 to 254 threads the bilayer; it reads IVGLCGLVSSILSILTLIYPW.

This sequence belongs to the peroxin-11 family. As to quaternary structure, homodimer. Heterodimer with PEX11G. Interacts with PEX19. Interacts with FIS1.

The protein resides in the peroxisome membrane. In terms of biological role, involved in peroxisomal proliferation. May regulate peroxisome division by recruiting the dynamin-related GTPase DNM1L to the peroxisomal membrane. Promotes membrane protrusion and elongation on the peroxisomal surface. The polypeptide is Peroxisomal membrane protein 11B (PEX11B) (Pongo abelii (Sumatran orangutan)).